Reading from the N-terminus, the 125-residue chain is Phosphoribosyl-AMP cyclohydrolase (125 aa).

Aspartate 74 lines the Mg(2+) pocket. Residue cysteine 75 coordinates Zn(2+). Mg(2+) contacts are provided by aspartate 76 and aspartate 78. Positions 92 and 99 each coordinate Zn(2+).

Belongs to the PRA-CH family. As to quaternary structure, homodimer. Requires Mg(2+) as cofactor. Zn(2+) is required as a cofactor.

The protein resides in the cytoplasm. It catalyses the reaction 1-(5-phospho-beta-D-ribosyl)-5'-AMP + H2O = 1-(5-phospho-beta-D-ribosyl)-5-[(5-phospho-beta-D-ribosylamino)methylideneamino]imidazole-4-carboxamide. The protein operates within amino-acid biosynthesis; L-histidine biosynthesis; L-histidine from 5-phospho-alpha-D-ribose 1-diphosphate: step 3/9. In terms of biological role, catalyzes the hydrolysis of the adenine ring of phosphoribosyl-AMP. The sequence is that of Phosphoribosyl-AMP cyclohydrolase from Trichlorobacter lovleyi (strain ATCC BAA-1151 / DSM 17278 / SZ) (Geobacter lovleyi).